We begin with the raw amino-acid sequence, 161 residues long: Endoribonuclease YbeY (161 aa).

3 residues coordinate Zn(2+): H127, H131, and H137.

Belongs to the endoribonuclease YbeY family. The cofactor is Zn(2+).

It is found in the cytoplasm. Single strand-specific metallo-endoribonuclease involved in late-stage 70S ribosome quality control and in maturation of the 3' terminus of the 16S rRNA. In Listeria innocua serovar 6a (strain ATCC BAA-680 / CLIP 11262), this protein is Endoribonuclease YbeY.